The sequence spans 315 residues: MIDLCVLGTTGGMPMVDKYLSATLININGRKILIDCGEGTQVAMRKIGWGFKSVDLICITHSHGDHTIGLPGLISIMGNSGRTEKVTVVGPKGIKEIVNGLNVINPYLPYELEIIELENNDLKFIIDKNNMSLCEDNNKCNLILSSLEVEHSAKCLSYSFYIKRRPRFSVEKASKNNVPKPLWSKLQNQEIINYDNKIYTPDLVLDNARKGIKISYVTDTRPISAIPEFIKYSDLFICEGTYGSDEDIDKAIKNKHMTFRESATLALNGECKELILTHFSPALSEPESFVDNAKQVFHNSSVAYDGLIKTLKFID.

Zn(2+)-binding residues include histidine 61, histidine 63, aspartate 65, histidine 66, histidine 151, aspartate 219, and histidine 278. The active-site Proton acceptor is aspartate 65.

This sequence belongs to the RNase Z family. In terms of assembly, homodimer. It depends on Zn(2+) as a cofactor.

The enzyme catalyses Endonucleolytic cleavage of RNA, removing extra 3' nucleotides from tRNA precursor, generating 3' termini of tRNAs. A 3'-hydroxy group is left at the tRNA terminus and a 5'-phosphoryl group is left at the trailer molecule.. Zinc phosphodiesterase, which displays some tRNA 3'-processing endonuclease activity. Probably involved in tRNA maturation, by removing a 3'-trailer from precursor tRNA. The sequence is that of Ribonuclease Z from Clostridium botulinum (strain Eklund 17B / Type B).